A 210-amino-acid chain; its full sequence is Shikimate kinase (210 aa).

Gly34–Val39 serves as a coordination point for ATP. Residue Ser38 participates in Mg(2+) binding. Residues Asp56, Arg80, and Gly102 each contribute to the substrate site. Arg140 contributes to the ATP binding site. Position 159 (Arg159) interacts with substrate.

Belongs to the shikimate kinase family. As to quaternary structure, monomer. Mg(2+) is required as a cofactor.

It localises to the cytoplasm. It catalyses the reaction shikimate + ATP = 3-phosphoshikimate + ADP + H(+). The protein operates within metabolic intermediate biosynthesis; chorismate biosynthesis; chorismate from D-erythrose 4-phosphate and phosphoenolpyruvate: step 5/7. Its function is as follows. Catalyzes the specific phosphorylation of the 3-hydroxyl group of shikimic acid using ATP as a cosubstrate. This Bartonella quintana (strain Toulouse) (Rochalimaea quintana) protein is Shikimate kinase.